Reading from the N-terminus, the 483-residue chain is Membrane-bound lytic murein transglycosylase F (483 aa).

An N-terminal signal peptide occupies residues 1–18 (MKGLIARFIAGFALLLWA). Residues 19-267 (WDMVFPWQQL…RIEEKYFNHL (249 aa)) are non-LT domain. The interval 269–483 (HFDYVDIQSY…SKESDSTLKE (215 aa)) is LT domain. Residue E312 is part of the active site. Positions 458-483 (QQIQNNEEQPSVPQEISKESDSTLKE) are disordered. Residues 473–483 (ISKESDSTLKE) show a composition bias toward basic and acidic residues.

It in the N-terminal section; belongs to the bacterial solute-binding protein 3 family. This sequence in the C-terminal section; belongs to the transglycosylase Slt family.

Its subcellular location is the cell outer membrane. The enzyme catalyses Exolytic cleavage of the (1-&gt;4)-beta-glycosidic linkage between N-acetylmuramic acid (MurNAc) and N-acetylglucosamine (GlcNAc) residues in peptidoglycan, from either the reducing or the non-reducing ends of the peptidoglycan chains, with concomitant formation of a 1,6-anhydrobond in the MurNAc residue.. Murein-degrading enzyme that degrades murein glycan strands and insoluble, high-molecular weight murein sacculi, with the concomitant formation of a 1,6-anhydromuramoyl product. Lytic transglycosylases (LTs) play an integral role in the metabolism of the peptidoglycan (PG) sacculus. Their lytic action creates space within the PG sacculus to allow for its expansion as well as for the insertion of various structures such as secretion systems and flagella. The polypeptide is Membrane-bound lytic murein transglycosylase F (Actinobacillus pleuropneumoniae serotype 5b (strain L20)).